Reading from the N-terminus, the 218-residue chain is Large ribosomal subunit protein mL54 (218 aa).

Belongs to the mitochondrion-specific ribosomal protein mL54 family. In terms of assembly, component of the mitochondrial large ribosomal subunit (mt-LSU). Mature N.crassa 74S mitochondrial ribosomes consist of a small (37S) and a large (54S) subunit. The 37S small subunit contains a 16S ribosomal RNA (16S mt-rRNA) and 32 different proteins. The 54S large subunit contains a 23S rRNA (23S mt-rRNA) and 42 different proteins.

The protein localises to the mitochondrion. Functionally, component of the mitochondrial ribosome (mitoribosome), a dedicated translation machinery responsible for the synthesis of mitochondrial genome-encoded proteins, including at least some of the essential transmembrane subunits of the mitochondrial respiratory chain. The mitoribosomes are attached to the mitochondrial inner membrane and translation products are cotranslationally integrated into the membrane. In Neurospora crassa (strain ATCC 24698 / 74-OR23-1A / CBS 708.71 / DSM 1257 / FGSC 987), this protein is Large ribosomal subunit protein mL54 (mrpl37).